We begin with the raw amino-acid sequence, 685 residues long: Probable serine/threonine-protein kinase CPE1738 (685 aa).

In terms of domain architecture, Protein kinase spans 10-275 (YELLQCVGEG…LEKIKKDPNV (266 aa)). ATP is bound by residues 16–24 (VGEGGMSFV) and Lys39. Residue Glu143 is the Proton acceptor of the active site. The tract at residues 277–339 (ISSKSAEDED…NIQTKPQKAI (63 aa)) is disordered. Positions 306–329 (EPDEDDEDDDEYYEDDEDEDEEEN) are enriched in acidic residues. 4 PASTA domains span residues 376–440 (GKDV…TVSG), 441–508 (GEGQ…TISK), 513–581 (KSET…TINY), and 589–648 (EKPK…TMEE). A disordered region spans residues 480 to 500 (VPRGEVISQSPNANESVDKGS). The disordered stretch occupies residues 623-685 (DTAKVKSVSN…PKQPEQSGNN (63 aa)). 2 stretches are compositionally biased toward low complexity: residues 627-645 (VKSV…VSVT) and 654-685 (QPTQ…SGNN).

The protein belongs to the protein kinase superfamily. Ser/Thr protein kinase family.

The enzyme catalyses L-seryl-[protein] + ATP = O-phospho-L-seryl-[protein] + ADP + H(+). It catalyses the reaction L-threonyl-[protein] + ATP = O-phospho-L-threonyl-[protein] + ADP + H(+). The chain is Probable serine/threonine-protein kinase CPE1738 from Clostridium perfringens (strain 13 / Type A).